Reading from the N-terminus, the 855-residue chain is Protein translocase subunit SecA (855 aa).

Residues Q88, 106-110 (GEGKT), and D509 each bind ATP. Residues 815–837 (EANLQNKFEKKPARNEPCPCGSG) form a disordered region. C832, C834, C843, and C844 together coordinate Zn(2+).

It belongs to the SecA family. As to quaternary structure, monomer and homodimer. Part of the essential Sec protein translocation apparatus which comprises SecA, SecYEG and auxiliary proteins SecDF-YajC and YidC. The cofactor is Zn(2+).

The protein localises to the cell inner membrane. Its subcellular location is the cytoplasm. It catalyses the reaction ATP + H2O + cellular proteinSide 1 = ADP + phosphate + cellular proteinSide 2.. In terms of biological role, part of the Sec protein translocase complex. Interacts with the SecYEG preprotein conducting channel. Has a central role in coupling the hydrolysis of ATP to the transfer of proteins into and across the cell membrane, serving as an ATP-driven molecular motor driving the stepwise translocation of polypeptide chains across the membrane. The chain is Protein translocase subunit SecA from Campylobacter fetus subsp. fetus (strain 82-40).